The chain runs to 504 residues: Catalase (504 aa).

Residues 1 to 21 (MQMSKSFLLITVGLASTSLQA) form the signal peptide. Active-site residues include His-72 and Asn-145. A heme-binding site is contributed by Tyr-353.

This sequence belongs to the catalase family. Heme serves as cofactor.

It localises to the periplasm. It carries out the reaction 2 H2O2 = O2 + 2 H2O. Its function is as follows. Decomposes hydrogen peroxide into water and oxygen; serves to protect cells from the toxic effects of hydrogen peroxide. This chain is Catalase, found in Vibrio parahaemolyticus serotype O3:K6 (strain RIMD 2210633).